The following is a 308-amino-acid chain: L-lactate dehydrogenase 2 (308 aa).

Residues Val13, Asp34, Arg39, Tyr64, and 78 to 79 (GV) contribute to the NAD(+) site. Residue Arg87 coordinates substrate. NAD(+) is bound at residue Thr100. 119 to 122 (NPVD) contacts substrate. Thr142 contacts NAD(+). Position 147–150 (147–150 (DSMR)) interacts with substrate. The Proton acceptor role is filled by His174. Thr224 contributes to the substrate binding site.

It belongs to the LDH/MDH superfamily. LDH family. Homotetramer.

It is found in the cytoplasm. The catalysed reaction is (S)-lactate + NAD(+) = pyruvate + NADH + H(+). The protein operates within fermentation; pyruvate fermentation to lactate; (S)-lactate from pyruvate: step 1/1. Functionally, catalyzes the conversion of lactate to pyruvate. This chain is L-lactate dehydrogenase 2, found in Lactobacillus acidophilus (strain ATCC 700396 / NCK56 / N2 / NCFM).